Reading from the N-terminus, the 458-residue chain is BTB/POZ domain-containing protein At5g41330 (458 aa).

The region spanning 11–72 is the BTB domain; sequence NVVSINVGGR…LRTGNLPARS (62 aa). WD repeat units lie at residues 259–305, 360–399, and 421–458; these read DSAI…MVWE, LNER…LVGN, and SGEN…GISI.

Its pathway is protein modification; protein ubiquitination. May act as a substrate-specific adapter of an E3 ubiquitin-protein ligase complex (CUL3-RBX1-BTB) which mediates the ubiquitination and subsequent proteasomal degradation of target proteins. This Arabidopsis thaliana (Mouse-ear cress) protein is BTB/POZ domain-containing protein At5g41330.